Reading from the N-terminus, the 310-residue chain is Ribosomal RNA small subunit methyltransferase H (310 aa).

S-adenosyl-L-methionine is bound by residues Gly-33 to His-35, Asp-52, Phe-79, Asp-98, and Gln-105.

Belongs to the methyltransferase superfamily. RsmH family.

It localises to the cytoplasm. The catalysed reaction is cytidine(1402) in 16S rRNA + S-adenosyl-L-methionine = N(4)-methylcytidine(1402) in 16S rRNA + S-adenosyl-L-homocysteine + H(+). Functionally, specifically methylates the N4 position of cytidine in position 1402 (C1402) of 16S rRNA. The polypeptide is Ribosomal RNA small subunit methyltransferase H (Campylobacter jejuni subsp. doylei (strain ATCC BAA-1458 / RM4099 / 269.97)).